Consider the following 72-residue polypeptide: Translation initiation factor IF-1 (72 aa).

The 72-residue stretch at methionine 1–arginine 72 folds into the S1-like domain.

It belongs to the IF-1 family. In terms of assembly, component of the 30S ribosomal translation pre-initiation complex which assembles on the 30S ribosome in the order IF-2 and IF-3, IF-1 and N-formylmethionyl-tRNA(fMet); mRNA recruitment can occur at any time during PIC assembly.

It localises to the cytoplasm. In terms of biological role, one of the essential components for the initiation of protein synthesis. Stabilizes the binding of IF-2 and IF-3 on the 30S subunit to which N-formylmethionyl-tRNA(fMet) subsequently binds. Helps modulate mRNA selection, yielding the 30S pre-initiation complex (PIC). Upon addition of the 50S ribosomal subunit IF-1, IF-2 and IF-3 are released leaving the mature 70S translation initiation complex. This Vibrio cholerae serotype O1 (strain ATCC 39541 / Classical Ogawa 395 / O395) protein is Translation initiation factor IF-1.